Here is a 325-residue protein sequence, read N- to C-terminus: MSDTPQAILLMGPTASGKTGLALELARRFPVEIVSVDSALVYRDMDIGTAKPTAEEMAACPHHLIDVISPLQSYSAAQFHADANRLIADIQARGKLPLLVGGTMLYYKALLEGLSDLPQADAALRAELDADAALLGWPAMHARLAELDPATASRLNPNDSQRIHRALEVCLLSGKPMSELIAQGKEAAAGFRFLPLALVPRERGWLHARIAERFRIMLEQGFLDEVSRLRAKYPELTLNLPSMRCVGYRQAWEHQDGLYGHDEFVERGVAATRQLAKRQLTWTRSLDAIPVDAQRDGLAGLLGDAVDDFLAGRPPAESLRYAGDF.

12–19 (GPTASGKT) provides a ligand contact to ATP. 14–19 (TASGKT) provides a ligand contact to substrate. 3 interaction with substrate tRNA regions span residues 37 to 40 (DSAL), 161 to 165 (QRIHR), and 244 to 249 (RCVGYR).

The protein belongs to the IPP transferase family. As to quaternary structure, monomer. Mg(2+) is required as a cofactor.

The enzyme catalyses adenosine(37) in tRNA + dimethylallyl diphosphate = N(6)-dimethylallyladenosine(37) in tRNA + diphosphate. In terms of biological role, catalyzes the transfer of a dimethylallyl group onto the adenine at position 37 in tRNAs that read codons beginning with uridine, leading to the formation of N6-(dimethylallyl)adenosine (i(6)A). The protein is tRNA dimethylallyltransferase of Chromobacterium violaceum (strain ATCC 12472 / DSM 30191 / JCM 1249 / CCUG 213 / NBRC 12614 / NCIMB 9131 / NCTC 9757 / MK).